The chain runs to 256 residues: Dihydroorotate dehydrogenase B (NAD(+)), electron transfer subunit (256 aa).

The 101-residue stretch at Met-1–Val-101 folds into the FAD-binding FR-type domain. FAD is bound by residues Arg-52–Ser-55, Ile-69–Arg-71, and Gly-76–Thr-77. 4 residues coordinate [2Fe-2S] cluster: Cys-220, Cys-225, Cys-228, and Cys-243.

It belongs to the PyrK family. In terms of assembly, heterotetramer of 2 PyrK and 2 PyrD type B subunits. [2Fe-2S] cluster serves as cofactor. FAD is required as a cofactor.

It functions in the pathway pyrimidine metabolism; UMP biosynthesis via de novo pathway; orotate from (S)-dihydroorotate (NAD(+) route): step 1/1. Its function is as follows. Responsible for channeling the electrons from the oxidation of dihydroorotate from the FMN redox center in the PyrD type B subunit to the ultimate electron acceptor NAD(+). This Bacillus velezensis (strain DSM 23117 / BGSC 10A6 / LMG 26770 / FZB42) (Bacillus amyloliquefaciens subsp. plantarum) protein is Dihydroorotate dehydrogenase B (NAD(+)), electron transfer subunit.